Reading from the N-terminus, the 820-residue chain is Leucine--tRNA ligase (820 aa).

Positions 40–51 (PYPSGAGLHVGH) match the 'HIGH' region motif. The 'KMSKS' region motif lies at 601–605 (KMSKS). Lys604 serves as a coordination point for ATP.

This sequence belongs to the class-I aminoacyl-tRNA synthetase family.

It localises to the cytoplasm. It carries out the reaction tRNA(Leu) + L-leucine + ATP = L-leucyl-tRNA(Leu) + AMP + diphosphate. In Chlamydia felis (strain Fe/C-56) (Chlamydophila felis), this protein is Leucine--tRNA ligase.